Consider the following 303-residue polypeptide: Recombination-associated protein RdgC (303 aa).

Belongs to the RdgC family.

Its subcellular location is the cytoplasm. The protein resides in the nucleoid. Functionally, may be involved in recombination. The sequence is that of Recombination-associated protein RdgC from Shewanella frigidimarina (strain NCIMB 400).